Here is a 114-residue protein sequence, read N- to C-terminus: Ig heavy chain V region GOM (114 aa).

Positions 1 to 112 (EVQLVESGGD…YWGQGTLVTV (112 aa)) constitute an Ig-like domain.

The protein is Ig heavy chain V region GOM of Canis lupus familiaris (Dog).